Consider the following 259-residue polypeptide: Hydroxyethylthiazole kinase (259 aa).

Residue M37 participates in substrate binding. Residues R113 and T158 each contribute to the ATP site. G185 is a substrate binding site.

The protein belongs to the Thz kinase family. Mg(2+) is required as a cofactor.

The enzyme catalyses 5-(2-hydroxyethyl)-4-methylthiazole + ATP = 4-methyl-5-(2-phosphooxyethyl)-thiazole + ADP + H(+). It functions in the pathway cofactor biosynthesis; thiamine diphosphate biosynthesis; 4-methyl-5-(2-phosphoethyl)-thiazole from 5-(2-hydroxyethyl)-4-methylthiazole: step 1/1. In terms of biological role, catalyzes the phosphorylation of the hydroxyl group of 4-methyl-5-beta-hydroxyethylthiazole (THZ). This is Hydroxyethylthiazole kinase from Helicobacter pylori (strain ATCC 700392 / 26695) (Campylobacter pylori).